A 244-amino-acid polypeptide reads, in one-letter code: ATP synthase subunit 4, mitochondrial (244 aa).

A mitochondrion-targeting transit peptide spans 1 to 36 (MASRLAKSAICAARVRPVLSSRTIPAAATTLTSTRS).

The protein belongs to the eukaryotic ATPase B chain family. In terms of assembly, F-type ATPases have 2 components, CF(1) - the catalytic core - and CF(0) - the membrane proton channel. In yeast, the dimeric form of ATP synthase consists of 17 polypeptides: alpha, beta, gamma, delta, epsilon, 4 (B), 5 (OSCP), 6 (A), 8, 9 (C), d, E (Tim11), f, g, h, i/j and k.

Its subcellular location is the mitochondrion. It is found in the mitochondrion inner membrane. In terms of biological role, mitochondrial membrane ATP synthase (F(1)F(0) ATP synthase or Complex V) produces ATP from ADP in the presence of a proton gradient across the membrane which is generated by electron transport complexes of the respiratory chain. F-type ATPases consist of two structural domains, F(1) - containing the extramembraneous catalytic core, and F(0) - containing the membrane proton channel, linked together by a central stalk and a peripheral stalk. During catalysis, ATP synthesis in the catalytic domain of F(1) is coupled via a rotary mechanism of the central stalk subunits to proton translocation. Part of the complex F(0) domain and the peripheric stalk, which acts as a stator to hold the catalytic alpha(3)beta(3) subcomplex and subunit a/ATP6 static relative to the rotary elements. The sequence is that of ATP synthase subunit 4, mitochondrial (ATP4) from Paracoccidioides brasiliensis.